We begin with the raw amino-acid sequence, 317 residues long: Tumor necrosis factor ligand superfamily member 11 (317 aa).

The segment covering 1–16 has biased composition (basic and acidic residues); that stretch reads MRRASRDYTKYLRGSE. Positions 1-43 are disordered; it reads MRRASRDYTKYLRGSEEMGGGPGAPHEGPLHAPPPPAPHQPPA. The Cytoplasmic segment spans residues 1–47; sequence MRRASRDYTKYLRGSEEMGGGPGAPHEGPLHAPPPPAPHQPPAASRS. Residues 31-41 are compositionally biased toward pro residues; it reads HAPPPPAPHQP. A helical; Signal-anchor for type II membrane protein transmembrane segment spans residues 48-68; the sequence is MFVALLGLGLGQVVCSVALFF. Residues 69-317 lie on the Extracellular side of the membrane; it reads YFRAQMDPNR…FGAFKVRDID (249 aa). The region spanning 164-313 is the THD domain; sequence PFAHLTINAT…DATYFGAFKV (150 aa). 2 N-linked (GlcNAc...) asparagine glycosylation sites follow: asparagine 171 and asparagine 198.

This sequence belongs to the tumor necrosis factor family. In terms of assembly, homotrimer. Interacts with TNFRSF11B. Interacts with TNFRSF11A. Interacts with FBN1 (via N-terminal domain) in a Ca(+2)-dependent manner. Interacts with TNFAIP6 (via both Link and CUB domains). In terms of processing, the soluble form of isoform 1 derives from the membrane form by proteolytic processing. The cleavage may be catalyzed by ADAM17. In terms of tissue distribution, highest in the peripheral lymph nodes, weak in spleen, peripheral blood Leukocytes, bone marrow, heart, placenta, skeletal muscle, stomach and thyroid.

It is found in the cell membrane. The protein resides in the cytoplasm. It localises to the secreted. Functionally, cytokine that binds to TNFRSF11B/OPG and to TNFRSF11A/RANK. Osteoclast differentiation and activation factor. Augments the ability of dendritic cells to stimulate naive T-cell proliferation. May be an important regulator of interactions between T-cells and dendritic cells and may play a role in the regulation of the T-cell-dependent immune response. May also play an important role in enhanced bone-resorption in humoral hypercalcemia of malignancy. Induces osteoclastogenesis by activating multiple signaling pathways in osteoclast precursor cells, chief among which is induction of long lasting oscillations in the intracellular concentration of Ca (2+) resulting in the activation of NFATC1, which translocates to the nucleus and induces osteoclast-specific gene transcription to allow differentiation of osteoclasts. During osteoclast differentiation, in a TMEM64 and ATP2A2-dependent manner induces activation of CREB1 and mitochondrial ROS generation necessary for proper osteoclast generation. This is Tumor necrosis factor ligand superfamily member 11 (TNFSF11) from Homo sapiens (Human).